The following is a 310-amino-acid chain: Bifunctional phosphoglucose/phosphomannose isomerase (310 aa).

Residues 22 to 152 (FDGSFRTGTF…IRPKHEDIEE (131 aa)) enclose the SIS domain. The D-fructose 6-phosphate site is built by Gly-41, Ser-42, Ser-80, Ser-82, Thr-85, and Arg-128. The active-site Proton acceptor is Glu-202. D-fructose 6-phosphate is bound by residues His-218 and Lys-306. His-218 (proton donor) is an active-site residue. Lys-306 serves as the catalytic Proton acceptor.

The protein belongs to the PGI/PMI family. In terms of assembly, homodimer.

It carries out the reaction alpha-D-glucose 6-phosphate = beta-D-fructose 6-phosphate. The enzyme catalyses D-mannose 6-phosphate = D-fructose 6-phosphate. Its activity is regulated as follows. Inhibited by low concentrations of erythrose 4-phosphate and 6-phosphogluconate. Its function is as follows. Dual specificity isomerase that catalyzes the isomerization of both glucose-6-phosphate and mannose-6-phosphate to fructose-6-phosphate with similar catalytic efficiency. The sequence is that of Bifunctional phosphoglucose/phosphomannose isomerase from Thermoplasma acidophilum (strain ATCC 25905 / DSM 1728 / JCM 9062 / NBRC 15155 / AMRC-C165).